A 111-amino-acid chain; its full sequence is Cell division protein FtsB (111 aa).

Over 1–3 (MGK) the chain is Cytoplasmic. The helical transmembrane segment at 4-21 (LTLLLLILLGWLQYSLWL) threads the bilayer. Topologically, residues 22 to 111 (GKNGIHDYVR…TNTPSNNIQR (90 aa)) are periplasmic. Positions 33–63 (KDDVVVQQGNNAKLKDRNEQLFAEIDDLNGG) form a coiled coil. Residues 90 to 111 (ESNHRNANTAPSTNTPSNNIQR) are disordered. Over residues 95–111 (NANTAPSTNTPSNNIQR) the composition is skewed to low complexity.

The protein belongs to the FtsB family. Part of a complex composed of FtsB, FtsL and FtsQ.

It is found in the cell inner membrane. In terms of biological role, essential cell division protein. May link together the upstream cell division proteins, which are predominantly cytoplasmic, with the downstream cell division proteins, which are predominantly periplasmic. In Pectobacterium carotovorum subsp. carotovorum (strain PC1), this protein is Cell division protein FtsB.